A 276-amino-acid polypeptide reads, in one-letter code: 2,3,4,5-tetrahydropyridine-2,6-dicarboxylate N-succinyltransferase (276 aa).

The substrate site is built by arginine 104 and aspartate 141.

Belongs to the transferase hexapeptide repeat family. Homotrimer.

The protein localises to the cytoplasm. It catalyses the reaction (S)-2,3,4,5-tetrahydrodipicolinate + succinyl-CoA + H2O = (S)-2-succinylamino-6-oxoheptanedioate + CoA. Its pathway is amino-acid biosynthesis; L-lysine biosynthesis via DAP pathway; LL-2,6-diaminopimelate from (S)-tetrahydrodipicolinate (succinylase route): step 1/3. This Pseudoalteromonas translucida (strain TAC 125) protein is 2,3,4,5-tetrahydropyridine-2,6-dicarboxylate N-succinyltransferase.